A 367-amino-acid chain; its full sequence is Quinolinate synthase (367 aa).

The iminosuccinate site is built by H45 and S62. C109 contributes to the [4Fe-4S] cluster binding site. Iminosuccinate contacts are provided by residues Y140–N142 and S161. Position 229 (C229) interacts with [4Fe-4S] cluster. Residues H255 to E257 and T272 contribute to the iminosuccinate site. Position 319 (C319) interacts with [4Fe-4S] cluster.

The protein belongs to the quinolinate synthase family. Type 3 subfamily. [4Fe-4S] cluster is required as a cofactor.

It localises to the cytoplasm. The enzyme catalyses iminosuccinate + dihydroxyacetone phosphate = quinolinate + phosphate + 2 H2O + H(+). It functions in the pathway cofactor biosynthesis; NAD(+) biosynthesis; quinolinate from iminoaspartate: step 1/1. Functionally, catalyzes the condensation of iminoaspartate with dihydroxyacetone phosphate to form quinolinate. In Lysinibacillus sphaericus (strain C3-41), this protein is Quinolinate synthase.